Consider the following 110-residue polypeptide: Red pigment-concentrating prohormone (110 aa).

The N-terminal stretch at 1 to 25 (MVRRTGVTLLVVALVVVALVSSVSA) is a signal peptide. Gln-26 bears the Pyrrolidone carboxylic acid mark. Residue Trp-33 is modified to Tryptophan amide.

This sequence belongs to the AKH/HRTH/RPCH family.

Its subcellular location is the secreted. In terms of biological role, this hormone adapts the animal to light backgrounds by stimulating concentration of the pigment of its red body-chromatophores. The chain is Red pigment-concentrating prohormone from Carcinus maenas (Common shore crab).